Consider the following 439-residue polypeptide: Methylenetetrahydrofolate--tRNA-(uracil-5-)-methyltransferase TrmFO (439 aa).

8 to 13 (GGGLAG) lines the FAD pocket.

The protein belongs to the MnmG family. TrmFO subfamily. Requires FAD as cofactor.

It localises to the cytoplasm. It carries out the reaction uridine(54) in tRNA + (6R)-5,10-methylene-5,6,7,8-tetrahydrofolate + NADH + H(+) = 5-methyluridine(54) in tRNA + (6S)-5,6,7,8-tetrahydrofolate + NAD(+). The catalysed reaction is uridine(54) in tRNA + (6R)-5,10-methylene-5,6,7,8-tetrahydrofolate + NADPH + H(+) = 5-methyluridine(54) in tRNA + (6S)-5,6,7,8-tetrahydrofolate + NADP(+). Its function is as follows. Catalyzes the folate-dependent formation of 5-methyl-uridine at position 54 (M-5-U54) in all tRNAs. The polypeptide is Methylenetetrahydrofolate--tRNA-(uracil-5-)-methyltransferase TrmFO (Dictyoglomus thermophilum (strain ATCC 35947 / DSM 3960 / H-6-12)).